The sequence spans 221 residues: Phosphatidylserine decarboxylase proenzyme (221 aa).

Serine 189 functions as the Schiff-base intermediate with substrate; via pyruvic acid in the catalytic mechanism. Pyruvic acid (Ser); by autocatalysis is present on serine 189.

It belongs to the phosphatidylserine decarboxylase family. PSD-A subfamily. As to quaternary structure, heterodimer of a large membrane-associated beta subunit and a small pyruvoyl-containing alpha subunit. Requires pyruvate as cofactor. Is synthesized initially as an inactive proenzyme. Formation of the active enzyme involves a self-maturation process in which the active site pyruvoyl group is generated from an internal serine residue via an autocatalytic post-translational modification. Two non-identical subunits are generated from the proenzyme in this reaction, and the pyruvate is formed at the N-terminus of the alpha chain, which is derived from the carboxyl end of the proenzyme. The post-translation cleavage follows an unusual pathway, termed non-hydrolytic serinolysis, in which the side chain hydroxyl group of the serine supplies its oxygen atom to form the C-terminus of the beta chain, while the remainder of the serine residue undergoes an oxidative deamination to produce ammonia and the pyruvoyl prosthetic group on the alpha chain.

The protein localises to the cell membrane. It carries out the reaction a 1,2-diacyl-sn-glycero-3-phospho-L-serine + H(+) = a 1,2-diacyl-sn-glycero-3-phosphoethanolamine + CO2. It participates in phospholipid metabolism; phosphatidylethanolamine biosynthesis; phosphatidylethanolamine from CDP-diacylglycerol: step 2/2. In terms of biological role, catalyzes the formation of phosphatidylethanolamine (PtdEtn) from phosphatidylserine (PtdSer). The polypeptide is Phosphatidylserine decarboxylase proenzyme (Porphyromonas gingivalis (strain ATCC 33277 / DSM 20709 / CIP 103683 / JCM 12257 / NCTC 11834 / 2561)).